An 83-amino-acid polypeptide reads, in one-letter code: Small ribosomal subunit protein bS20 (83 aa).

Belongs to the bacterial ribosomal protein bS20 family.

Functionally, binds directly to 16S ribosomal RNA. This is Small ribosomal subunit protein bS20 from Leuconostoc citreum (strain KM20).